The primary structure comprises 214 residues: 3-isopropylmalate dehydratase small subunit (214 aa).

It belongs to the LeuD family. LeuD type 1 subfamily. Heterodimer of LeuC and LeuD.

It catalyses the reaction (2R,3S)-3-isopropylmalate = (2S)-2-isopropylmalate. Its pathway is amino-acid biosynthesis; L-leucine biosynthesis; L-leucine from 3-methyl-2-oxobutanoate: step 2/4. Its function is as follows. Catalyzes the isomerization between 2-isopropylmalate and 3-isopropylmalate, via the formation of 2-isopropylmaleate. The sequence is that of 3-isopropylmalate dehydratase small subunit from Pseudomonas entomophila (strain L48).